The sequence spans 89 residues: Huwentoxin-IV (89 aa).

Residues 1–24 (MVNMKASMFLALAGLVLLFVVCYA) form the signal peptide. The propeptide occupies 25–52 (SESEEKEFSNELLSSVLAVDDNSKGEER). Pyrrolidone carboxylic acid (Glu); partial is present on Glu-53. Cystine bridges form between Cys-54-Cys-69, Cys-61-Cys-76, and Cys-68-Cys-83. Ile-87 bears the Isoleucine amide mark.

This sequence belongs to the neurotoxin 10 (Hwtx-1) family. 22 (Htx-4) subfamily. Two forms of huwentoxin-IV exist in the venom of H.schmidti, a non-N-terminally modified (HwTx-IV) and a naturally modified peptide with pyroglutamic acid residue at position 53 (mHwTx-IV). mHwTx-IV shows no observable difference with the unmodified toxin when applied to the TTX-S sodium channel of DRG neuron (IC(50)~50 nM) or when tested on hNav1.7/SCN9A (IC(50)=30.8 nM). In addition, similarly to the unmodified toxin, mHwTx-IV has only a weak affinity for lipid membranes. However, in contrast with HwTx-IV, which dissociates at moderate and high depolarization voltages (50-200 mV), mHwTx-IV inhibition of TTX-sensitive sodium channels is not reversed by strong depolarization voltages. As to expression, expressed by the venom gland.

It is found in the secreted. In terms of biological role, this lethal neurotoxin (without cyclization at position 53) inhibits neuronal voltage-gated sodium channel Nav1.2/SCN2A (IC(50)=10-150 nM), rNav1.3/SCN3A (IC(50)=338 nM), Nav1.6/SCN8A (IC(50)=117 nM), and hNav1.7/SCN9A (IC(50)=9.6-33 nM). It inhibits activation of sodium channel by trapping the voltage sensor of domain II (DIIS4) in the closed configuration. The toxin neither shifts the Nav1.7/SCN9A activation curve nor modifies the slope factor. It does not slow fast-inactivation of hNav1.7/SCN9A channels. In addition, it has only a weak affinity for lipid membranes. This toxin also exists with a pyroglutamate at position 53. The sole difference observed between modified (mHwTx-IV) and unmodified toxins is that moderate or high depolarization voltages (200 mV) permit the unmodified toxin to dissociate, whereas mHwTx-IV toxin does not dissociate, even at high depolarization voltages. These data indicate that mHwTx-IV strongly binds to voltage sensor of sodium channel even at extreme depolarization voltages. In Cyriopagopus schmidti (Chinese bird spider), this protein is Huwentoxin-IV.